Here is a 457-residue protein sequence, read N- to C-terminus: tRNA-2-methylthio-N(6)-dimethylallyladenosine synthase (457 aa).

One can recognise an MTTase N-terminal domain in the interval 3-120; that stretch reads KKVYIKTFGC…LPQMIDQRRA (118 aa). The [4Fe-4S] cluster site is built by C12, C49, C83, C157, C161, and C164. The Radical SAM core domain maps to 143 to 377; that stretch reads RVEGPSAFVS…QATIEENVAR (235 aa). The TRAM domain maps to 380 to 447; that stretch reads RSMVGKVERI…PHSLRGELLL (68 aa).

It belongs to the methylthiotransferase family. MiaB subfamily. Monomer. Requires [4Fe-4S] cluster as cofactor.

The protein localises to the cytoplasm. It catalyses the reaction N(6)-dimethylallyladenosine(37) in tRNA + (sulfur carrier)-SH + AH2 + 2 S-adenosyl-L-methionine = 2-methylsulfanyl-N(6)-dimethylallyladenosine(37) in tRNA + (sulfur carrier)-H + 5'-deoxyadenosine + L-methionine + A + S-adenosyl-L-homocysteine + 2 H(+). In terms of biological role, catalyzes the methylthiolation of N6-(dimethylallyl)adenosine (i(6)A), leading to the formation of 2-methylthio-N6-(dimethylallyl)adenosine (ms(2)i(6)A) at position 37 in tRNAs that read codons beginning with uridine. The sequence is that of tRNA-2-methylthio-N(6)-dimethylallyladenosine synthase from Burkholderia ambifaria (strain MC40-6).